We begin with the raw amino-acid sequence, 75 residues long: Tautomerase PptA (75 aa).

Catalysis depends on Pro2, which acts as the Proton acceptor; via imino nitrogen.

It belongs to the 4-oxalocrotonate tautomerase family. PptA subfamily. As to quaternary structure, homodimer.

The protein localises to the cytoplasm. The polypeptide is Tautomerase PptA (Escherichia coli O139:H28 (strain E24377A / ETEC)).